Reading from the N-terminus, the 232-residue chain is Protein TIFY 10c (232 aa).

Residues 54–73 form a disordered region; sequence PPAAGAGGAFRPPPTTMNLL. The 36-residue stretch at 114-149 folds into the Tify domain; the sequence is AGEKAQQLTIFYGGKVVVFENFPSTKVKDLLQIVST. Residues 152–177 form a disordered region; that stretch reads GVDKNTGTAATQSLPRPAHNSLPDLP. A compositionally biased stretch (polar residues) spans 156–165; it reads NTGTAATQSL. The Jas motif lies at 177-202; that stretch reads PIARRNSLHRFLEKRKGRMNANAPYQ. The Nuclear localization signal motif lies at 179–186; that stretch reads ARRNSLHR.

Belongs to the TIFY/JAZ family. Interacts with BHLH148. Interacts with COI1B in a coronatine-dependent manner. Coronatine is an analog of jasmonoyl isoleucine (JA-Ile). Interacts with TIFY5/JAZ2, TIFY6B/JAZ4, TIFY9/JAZ5, TIFY11A, TIFY11D/JAZ12, TIFY11G/JAZ15 and NINJA1. Ubiquitinated. Increase in jasmonoyl isoleucine (JA-Ile) levels mediates its degradation via COI1B-mediated proteasome pathway.

Its subcellular location is the nucleus. The protein resides in the cytoplasm. It localises to the cytosol. Functionally, repressor of jasmonate (JA) responses. Acts as a repressor of JA-induced resistance to the bacterial blight pathogen Xanthomonas oryzae pv. oryzae (Xoo). Regulates JA-induced accumulation of linalool at the transcriptional level of linalool synthase gene LIS. Linalool is important for resistance to bacterial blight pathogen Xoo. In Oryza sativa subsp. japonica (Rice), this protein is Protein TIFY 10c.